Reading from the N-terminus, the 640-residue chain is Chaperone protein DnaK (640 aa).

A Phosphothreonine; by autocatalysis modification is found at Thr199. A compositionally biased stretch (low complexity) spans 606–621; the sequence is QQAAGAGAQQADGTGK. The tract at residues 606–640 is disordered; sequence QQAAGAGAQQADGTGKAADDGVVDAEFEEVKEDNK. Residues 626–640 are compositionally biased toward acidic residues; it reads GVVDAEFEEVKEDNK.

This sequence belongs to the heat shock protein 70 family.

Its function is as follows. Acts as a chaperone. This Cellvibrio japonicus (strain Ueda107) (Pseudomonas fluorescens subsp. cellulosa) protein is Chaperone protein DnaK.